Here is a 261-residue protein sequence, read N- to C-terminus: Homeobox protein engrailed-2b (261 aa).

Composition is skewed to basic and acidic residues over residues 1-21, 53-72, and 100-116; these read MEEN…DESN, GRRK…RENR, and KKTD…RAET. Disordered regions lie at residues 1 to 24, 53 to 125, and 152 to 176; these read MEEN…NRAI, GRRK…SSDS, and DRPS…KRPR. Residues 172-231 constitute a DNA-binding region (homeobox); the sequence is DKRPRTAFTAEQLQRLKNEFQNNRYLTEQRRQALAQELGLNESQIKIWFQNKRAKIKKAT.

This sequence belongs to the engrailed homeobox family.

Its subcellular location is the nucleus. The polypeptide is Homeobox protein engrailed-2b (eng2b) (Danio rerio (Zebrafish)).